A 193-amino-acid chain; its full sequence is DNA damage-inducible transcript 4-like protein (193 aa).

This sequence belongs to the DDIT4 family. In terms of tissue distribution, up-regulated in atherosclerotic plaques relative to healthy segments of the same artery.

It localises to the cytoplasm. Inhibits cell growth by regulating the TOR signaling pathway upstream of the TSC1-TSC2 complex and downstream of AKT1. This chain is DNA damage-inducible transcript 4-like protein (DDIT4L), found in Homo sapiens (Human).